The following is a 273-amino-acid chain: Spore development regulator vosA (273 aa).

Residues 66–75 (STTQELQSTQ) are compositionally biased toward low complexity. The disordered stretch occupies residues 66–86 (STTQELQSTQPIAVRQQPRAA). The region spanning 70–253 (ELQSTQPIAV…KEQGCIISIK (184 aa)) is the Velvet domain. The Nuclear localization signal motif lies at 211–218 (FPTLTEIK). A compositionally biased stretch (basic and acidic residues) spans 254-267 (KGNERARPRGADGR). Residues 254-273 (KGNERARPRGADGRSDDEDD) are disordered.

Belongs to the velvet family. VosA subfamily. Forms a heterodimeric complex with velB; the formation of the velB-vosA complex is light-dependent.

It localises to the nucleus. Its function is as follows. Component of the velB-vosA heterodimeric complex that plays a dual role in activating genes associated with spore maturation and repressing certain development-associated genes. The complex binds DNA through the DNA-binding domain of vosA that recognizes an 11-nucleotide consensus sequence 5'-CTGGCCGCGGC-3' consisting of two motifs in the promoters of key developmental regulatory genes. Positively regulates the expression of wetA and represses abaA and brlA. Acts as a crucial regulator of both conidiation capacity and conidial quality. Responsible for the synthesis and accumulation of intracellular trehalose. In Beauveria bassiana (strain ARSEF 2860) (White muscardine disease fungus), this protein is Spore development regulator vosA.